A 216-amino-acid chain; its full sequence is MSALGQITITVSRCWNTERNQTDKNPCLHGAYLQLRETVKNKSTHLKKPLMKQAPPWKDHLTFQPLHPAERKTQVWRWQSGNSSDLETTSSASPWPTGSNRDVVLNTLAESCCGLSELITAPPYAGVSIQGFSQIWVLFPFCGGTFHHNEKDVLGLQDFERESVSTSQSRNISLLTLGQLQNCVIGKLTIIDLLTEHLLGVRHGVICFPWGLPSSS.

Isoform 4 is expressed in placenta, lung, kidney and pancreas.

Functionally, may play a role in uric acid excretion. The polypeptide is Talanin (ZNF365) (Homo sapiens (Human)).